The primary structure comprises 65 residues: uncharacterized protein (65 aa).

This is an uncharacterized protein from Bacillus subtilis (strain 168).